The following is a 339-amino-acid chain: UPF0324 membrane protein CPE0129 (339 aa).

The next 8 membrane-spanning stretches (helical) occupy residues 12–30 (ILPG…EFLG), 35–54 (TIGA…NTLF), 90–112 (LGFN…TYFI), 122–144 (YSLL…VSPV), 156–178 (ITIV…SILY), 210–232 (VVEL…VLVF), 259–281 (WFII…GILG), and 316–338 (MLYG…NIFI).

This sequence belongs to the UPF0324 family.

It is found in the cell membrane. This is UPF0324 membrane protein CPE0129 from Clostridium perfringens (strain 13 / Type A).